The sequence spans 1001 residues: Serine/threonine-protein kinase TAO1-A (1001 aa).

The region spanning 28–281 is the Protein kinase domain; it reads FSDLREIGHG…SDELLKNMFV (254 aa). ATP contacts are provided by residues 34 to 42 and Lys57; that span reads IGHGSFGAV. Asp151 functions as the Proton acceptor in the catalytic mechanism. Disordered stretches follow at residues 324–431 and 567–586; these read PAVE…HKSH and KEELNENQSTPKKEKQEWLS. The span at 350-370 shows a compositional bias: low complexity; it reads SNQSIPSMSISASSQSSSVTS. Basic and acidic residues-rich tracts occupy residues 375-388 and 577-586; these read SDDKSELDMMEGDH and PKKEKQEWLS. Coiled coils occupy residues 458-651 and 754-877; these read SELR…EHAM and KAVL…EIEA. Positions 911–1001 are disordered; it reads SHNPTGGPGP…ISNGSRMSYT (91 aa). A compositionally biased stretch (low complexity) spans 921-930; it reads HWGHPMAGPP. Polar residues-rich tracts occupy residues 949-967 and 974-1001; these read GSVQGVSRGSTMGVRNSPQ and SGGQTEQGMSRSTSVTSQISNGSRMSYT.

It belongs to the protein kinase superfamily. STE Ser/Thr protein kinase family. STE20 subfamily.

The protein localises to the cytoplasm. It carries out the reaction L-seryl-[protein] + ATP = O-phospho-L-seryl-[protein] + ADP + H(+). The enzyme catalyses L-threonyl-[protein] + ATP = O-phospho-L-threonyl-[protein] + ADP + H(+). In terms of biological role, serine/threonine-protein kinase involved in various processes such as p38/mapk14 stress-activated MAPK cascade, DNA damage response and regulation of cytoskeleton stability. Acts as an activator of the p38/MAPK14 stress-activated MAPK cascade by mediating phosphorylation and subsequent activation of upstream MAP kinase kinases. In response to DNA damage, involved in the G2/M transition DNA damage checkpoint by activating the p38/MAPK14 stress-activated MAPK cascade. The polypeptide is Serine/threonine-protein kinase TAO1-A (taok1-a) (Xenopus laevis (African clawed frog)).